A 502-amino-acid polypeptide reads, in one-letter code: Mannitol 2-dehydrogenase (502 aa).

37–48 provides a ligand contact to NAD(+); the sequence is IVHIGVGGFHRA.

The protein belongs to the mannitol dehydrogenase family. In terms of assembly, monomer.

It carries out the reaction D-mannitol + NAD(+) = D-fructose + NADH + H(+). Functionally, catalyzes the NAD(H)-dependent interconversion of D-fructose and D-mannitol in the mannitol metabolic pathway. This Aspergillus clavatus (strain ATCC 1007 / CBS 513.65 / DSM 816 / NCTC 3887 / NRRL 1 / QM 1276 / 107) protein is Mannitol 2-dehydrogenase.